Here is a 213-residue protein sequence, read N- to C-terminus: Adenylate kinase (213 aa).

Residue 10–15 coordinates ATP; that stretch reads GAGKGT. Positions 30 to 59 are NMP; that stretch reads AVGDIFRTIIKTSTSEAELINNYVKQGALI. AMP is bound by residues Arg36, 57 to 59, 85 to 88, and Gln92; these read ALI and GYPR. Positions 123 to 161 are LID; sequence GRYSCKNCGKIYNIHFLQPKIEHVCDVCSSSVFDYRKDD. Arg124 provides a ligand contact to ATP. Residues Cys127 and Cys130 each coordinate Zn(2+). 133 to 134 lines the ATP pocket; the sequence is IY. Cys147 and Cys150 together coordinate Zn(2+). AMP contacts are provided by Arg158 and Arg169. ATP is bound at residue Lys197.

The protein belongs to the adenylate kinase family. As to quaternary structure, monomer.

The protein resides in the cytoplasm. The enzyme catalyses AMP + ATP = 2 ADP. The protein operates within purine metabolism; AMP biosynthesis via salvage pathway; AMP from ADP: step 1/1. Catalyzes the reversible transfer of the terminal phosphate group between ATP and AMP. Plays an important role in cellular energy homeostasis and in adenine nucleotide metabolism. In Rickettsia prowazekii (strain Madrid E), this protein is Adenylate kinase.